Here is a 659-residue protein sequence, read N- to C-terminus: MRVTLSTLDTCESSFTPLVVIELAQDVKDETKEWLKNRIIAKKKDGGAQLLFRPLLNKYEKETLENQNLYLVGASNVRLLLGAEAVGLVKECTDAAMRAFTYGTRHNFKGFHDNNNDFLTMAECQFIIKHELENLRARDEKMIPGYPQAKLYPGKSLMRRLLTSGIVTQVFPLHDTEALKKLEDTWYTRFALKYQPIDSIRSYFGETIALYFGFLEYFTFALIPMAIIGLPYYLFVWEDYDKYVIFASFNLIWSTVILEVWKRGCANMTYRWGTLVMKRQFEEPRPGFHGVLGINSVTGREEPLYSSYKRQLRIYLVSLPFVCLCLYFSLYVMMIYFDMEDWALSLHEDSGSEWTSLLLYVPSIVYAVVIEIMNRLYRYAAEFLTSWENHRLESAYQNHLVLKVLVFNFLNCFASLFYIAFVLKDMKLLRQSLATLLITSQILNQVVESLLPYWLQRKYCARVKRKVQALKSEVDTTLYEQVLLEKEMGTYLGTFDDYLELFLQFGYVSLFSCVYPLAAAFAVLNNFTEVNSDALKMCRVFKRPFAEPSASIGVWQLAFETMSVISVVTNCALIGMSPQVNAVFPESKTDLVLIVVAVEHALLALKFILAFAIPDKPRHIQQKLARLEFESLEALKQQQMKLVAENLKEEYQEDGKEAT.

The Cytoplasmic segment spans residues 1-207; the sequence is MRVTLSTLDT…DSIRSYFGET (207 aa). The helical transmembrane segment at 208–228 threads the bilayer; it reads IALYFGFLEYFTFALIPMAII. Topologically, residues 229-240 are extracellular; the sequence is GLPYYLFVWEDY. A helical membrane pass occupies residues 241–261; that stretch reads DKYVIFASFNLIWSTVILEVW. At 262-316 the chain is on the cytoplasmic side; that stretch reads KRGCANMTYRWGTLVMKRQFEEPRPGFHGVLGINSVTGREEPLYSSYKRQLRIYL. A helical transmembrane segment spans residues 317-337; that stretch reads VSLPFVCLCLYFSLYVMMIYF. The Extracellular portion of the chain corresponds to 338–352; sequence DMEDWALSLHEDSGS. Residues 353–373 traverse the membrane as a helical segment; the sequence is EWTSLLLYVPSIVYAVVIEIM. The Cytoplasmic segment spans residues 374 to 400; the sequence is NRLYRYAAEFLTSWENHRLESAYQNHL. A helical membrane pass occupies residues 401–421; the sequence is VLKVLVFNFLNCFASLFYIAF. The Extracellular segment spans residues 422 to 500; it reads VLKDMKLLRQ…YLGTFDDYLE (79 aa). Residues 501–521 form a helical membrane-spanning segment; that stretch reads LFLQFGYVSLFSCVYPLAAAF. Topologically, residues 522–553 are cytoplasmic; the sequence is AVLNNFTEVNSDALKMCRVFKRPFAEPSASIG. Residues 554-574 form a helical membrane-spanning segment; sequence VWQLAFETMSVISVVTNCALI. Over 575–590 the chain is Extracellular; sequence GMSPQVNAVFPESKTD. A helical transmembrane segment spans residues 591-611; it reads LVLIVVAVEHALLALKFILAF. At 612-659 the chain is on the cytoplasmic side; the sequence is AIPDKPRHIQQKLARLEFESLEALKQQQMKLVAENLKEEYQEDGKEAT.

Belongs to the anoctamin family. Predominant expression seen in epithelial tissues.

It is found in the cell membrane. Functionally, does not exhibit calcium-activated chloride channel (CaCC) activity. Can inhibit the activity of ANO1. The sequence is that of Anoctamin-10 (Ano10) from Mus musculus (Mouse).